We begin with the raw amino-acid sequence, 409 residues long: Rho-GTPase-activating protein BAG7 (409 aa).

Polar residues predominate over residues 1-26; sequence MFNMNLLSTPSSEEGSPQNRSSSMSS. Positions 1–32 are disordered; sequence MFNMNLLSTPSSEEGSPQNRSSSMSSVEGKKD. Residues 50 to 257 enclose the Rho-GAP domain; that stretch reads VSLEESLKVA…FLILHASDII (208 aa). The segment at 362–409 is disordered; sequence KLLGNVGNSSNTGIKDPTERVPRGEHKTKHKQRQSWLRRLTSPSRTQP. Positions 377–386 are enriched in basic and acidic residues; it reads DPTERVPRGE.

As to quaternary structure, interacts with RHO1.

Its function is as follows. Acts in signal transduction. Activates RHO1. The protein is Rho-GTPase-activating protein BAG7 (BAG7) of Saccharomyces cerevisiae (strain ATCC 204508 / S288c) (Baker's yeast).